The following is a 1627-amino-acid chain: Formin-like protein 5 (1627 aa).

The Phosphatase tensin-type domain maps to 5-194 (RKFFLKKTPD…HYITRQGSGP (190 aa)). Cys-127 acts as the Phosphocysteine intermediate in catalysis. One can recognise a C2 tensin-type domain in the interval 200 to 337 (SRPLILDSIV…FRAEVVFSDP (138 aa)). Disordered regions lie at residues 370–413 (EAEE…LEKH), 680–787 (TKRE…YDSS), 801–1181 (KFNV…RGVV), 1241–1261 (AAVP…SLGS), and 1571–1627 (KQAE…KDVG). Basic and acidic residues-rich tracts occupy residues 402-413 (VSREDSGSLEKH), 681-691 (KREESGGRRDV), 700-717 (IEAR…RQIP), and 726-742 (MPVD…EKLG). Composition is skewed to pro residues over residues 824–835 (APPPPPPPPPPY), 852–870 (QPPP…PPPA), 877–886 (IPPPPPPPPL), 897–908 (VPPPPPPPPPPR), 931–965 (ISPP…PPSA), and 974–1168 (APPP…PPGG). The 401-residue stretch at 1188–1588 (FGAAAARKST…RAEKEAEAEK (401 aa)) folds into the FH2 domain. Basic and acidic residues-rich tracts occupy residues 1248–1261 (DSSK…SLGS) and 1571–1590 (KQAE…EKSK). The span at 1600–1611 (KPSNPSRQVKQT) shows a compositional bias: polar residues. The span at 1612–1627 (PDTKTRAASRRGKDVG) shows a compositional bias: basic and acidic residues.

Belongs to the formin-like family. Class-II subfamily.

In Oryza sativa subsp. japonica (Rice), this protein is Formin-like protein 5 (FH5).